We begin with the raw amino-acid sequence, 208 residues long: Protein-L-isoaspartate O-methyltransferase (208 aa).

Ser-59 is an active-site residue.

Belongs to the methyltransferase superfamily. L-isoaspartyl/D-aspartyl protein methyltransferase family.

The protein resides in the cytoplasm. The enzyme catalyses [protein]-L-isoaspartate + S-adenosyl-L-methionine = [protein]-L-isoaspartate alpha-methyl ester + S-adenosyl-L-homocysteine. Its function is as follows. Catalyzes the methyl esterification of L-isoaspartyl residues in peptides and proteins that result from spontaneous decomposition of normal L-aspartyl and L-asparaginyl residues. It plays a role in the repair and/or degradation of damaged proteins. The polypeptide is Protein-L-isoaspartate O-methyltransferase (Salmonella paratyphi A (strain ATCC 9150 / SARB42)).